Consider the following 300-residue polypeptide: Ribosomal RNA small subunit methyltransferase H (300 aa).

Residues 33 to 35 (AGH), Asp-52, Phe-86, Asp-97, and Gln-104 contribute to the S-adenosyl-L-methionine site.

This sequence belongs to the methyltransferase superfamily. RsmH family.

The protein localises to the cytoplasm. It catalyses the reaction cytidine(1402) in 16S rRNA + S-adenosyl-L-methionine = N(4)-methylcytidine(1402) in 16S rRNA + S-adenosyl-L-homocysteine + H(+). Its function is as follows. Specifically methylates the N4 position of cytidine in position 1402 (C1402) of 16S rRNA. The polypeptide is Ribosomal RNA small subunit methyltransferase H (Aliarcobacter butzleri (strain RM4018) (Arcobacter butzleri)).